Consider the following 152-residue polypeptide: Large ribosomal subunit protein bL9 (152 aa).

The protein belongs to the bacterial ribosomal protein bL9 family.

Functionally, binds to the 23S rRNA. This is Large ribosomal subunit protein bL9 from Nostoc punctiforme (strain ATCC 29133 / PCC 73102).